A 797-amino-acid polypeptide reads, in one-letter code: Xaa-Pro dipeptidyl-peptidase (797 aa).

Residues Ser-370, Asp-490, and His-521 each act as charge relay system in the active site.

Belongs to the peptidase S15 family. Homodimer.

It is found in the cytoplasm. It catalyses the reaction Hydrolyzes Xaa-Pro-|- bonds to release unblocked, N-terminal dipeptides from substrates including Ala-Pro-|-p-nitroanilide and (sequentially) Tyr-Pro-|-Phe-Pro-|-Gly-Pro-|-Ile.. Removes N-terminal dipeptides sequentially from polypeptides having unsubstituted N-termini provided that the penultimate residue is proline. The sequence is that of Xaa-Pro dipeptidyl-peptidase from Lacticaseibacillus paracasei (strain ATCC 334 / BCRC 17002 / CCUG 31169 / CIP 107868 / KCTC 3260 / NRRL B-441) (Lactobacillus paracasei).